A 396-amino-acid chain; its full sequence is 1-deoxy-D-xylulose 5-phosphate reductoisomerase (396 aa).

6 residues coordinate NADPH: T15, G16, S17, I18, G41, and N130. K131 contacts 1-deoxy-D-xylulose 5-phosphate. E132 contacts NADPH. Residue D155 coordinates Mn(2+). The 1-deoxy-D-xylulose 5-phosphate site is built by S156, E157, S181, and H204. E157 lines the Mn(2+) pocket. G210 is an NADPH binding site. 1-deoxy-D-xylulose 5-phosphate-binding residues include S217, N222, K223, and E226. E226 provides a ligand contact to Mn(2+).

The protein belongs to the DXR family. Mg(2+) is required as a cofactor. Mn(2+) serves as cofactor.

The enzyme catalyses 2-C-methyl-D-erythritol 4-phosphate + NADP(+) = 1-deoxy-D-xylulose 5-phosphate + NADPH + H(+). It functions in the pathway isoprenoid biosynthesis; isopentenyl diphosphate biosynthesis via DXP pathway; isopentenyl diphosphate from 1-deoxy-D-xylulose 5-phosphate: step 1/6. Catalyzes the NADPH-dependent rearrangement and reduction of 1-deoxy-D-xylulose-5-phosphate (DXP) to 2-C-methyl-D-erythritol 4-phosphate (MEP). In Bifidobacterium longum (strain DJO10A), this protein is 1-deoxy-D-xylulose 5-phosphate reductoisomerase.